We begin with the raw amino-acid sequence, 327 residues long: tRNA N6-adenosine threonylcarbamoyltransferase (327 aa).

Residues histidine 109 and histidine 113 each contribute to the Fe cation site. Residues 132 to 136 (MVSGG), aspartate 165, glycine 178, aspartate 182, and asparagine 268 contribute to the substrate site. Fe cation is bound at residue aspartate 296.

Belongs to the KAE1 / TsaD family. The cofactor is Fe(2+).

It is found in the cytoplasm. It catalyses the reaction L-threonylcarbamoyladenylate + adenosine(37) in tRNA = N(6)-L-threonylcarbamoyladenosine(37) in tRNA + AMP + H(+). Functionally, required for the formation of a threonylcarbamoyl group on adenosine at position 37 (t(6)A37) in tRNAs that read codons beginning with adenine. Is involved in the transfer of the threonylcarbamoyl moiety of threonylcarbamoyl-AMP (TC-AMP) to the N6 group of A37, together with TsaE and TsaB. TsaD likely plays a direct catalytic role in this reaction. This is tRNA N6-adenosine threonylcarbamoyltransferase from Thermotoga petrophila (strain ATCC BAA-488 / DSM 13995 / JCM 10881 / RKU-1).